The following is a 633-amino-acid chain: tRNA uridine 5-carboxymethylaminomethyl modification enzyme MnmG (633 aa).

FAD-binding positions include 15–20 (GAGHAG), Val-127, and Ser-182. 276–290 (GPRYCPSIEDKIVRF) is a binding site for NAD(+). Gln-373 provides a ligand contact to FAD.

It belongs to the MnmG family. Homodimer. Heterotetramer of two MnmE and two MnmG subunits. FAD serves as cofactor.

The protein localises to the cytoplasm. Functionally, NAD-binding protein involved in the addition of a carboxymethylaminomethyl (cmnm) group at the wobble position (U34) of certain tRNAs, forming tRNA-cmnm(5)s(2)U34. In Streptococcus thermophilus (strain ATCC BAA-491 / LMD-9), this protein is tRNA uridine 5-carboxymethylaminomethyl modification enzyme MnmG.